The primary structure comprises 238 residues: Pyridoxine 5'-phosphate synthase (238 aa).

N7 is a binding site for 3-amino-2-oxopropyl phosphate. 9–10 (DH) provides a ligand contact to 1-deoxy-D-xylulose 5-phosphate. R18 is a binding site for 3-amino-2-oxopropyl phosphate. The Proton acceptor role is filled by H43. 1-deoxy-D-xylulose 5-phosphate is bound by residues R45 and H50. E70 functions as the Proton acceptor in the catalytic mechanism. Position 100 (T100) interacts with 1-deoxy-D-xylulose 5-phosphate. Residue H191 is the Proton donor of the active site. 3-amino-2-oxopropyl phosphate-binding positions include G192 and 213–214 (GH).

This sequence belongs to the PNP synthase family. Homooctamer; tetramer of dimers.

It is found in the cytoplasm. The enzyme catalyses 3-amino-2-oxopropyl phosphate + 1-deoxy-D-xylulose 5-phosphate = pyridoxine 5'-phosphate + phosphate + 2 H2O + H(+). Its pathway is cofactor biosynthesis; pyridoxine 5'-phosphate biosynthesis; pyridoxine 5'-phosphate from D-erythrose 4-phosphate: step 5/5. Catalyzes the complicated ring closure reaction between the two acyclic compounds 1-deoxy-D-xylulose-5-phosphate (DXP) and 3-amino-2-oxopropyl phosphate (1-amino-acetone-3-phosphate or AAP) to form pyridoxine 5'-phosphate (PNP) and inorganic phosphate. The polypeptide is Pyridoxine 5'-phosphate synthase (Syntrophobacter fumaroxidans (strain DSM 10017 / MPOB)).